The sequence spans 398 residues: Cysteine protease ATG4A (398 aa).

Cys77 acts as the Nucleophile in catalysis. Residues Asp279 and His281 contribute to the active site. The LIR signature appears at 393–396 (FEIL).

Belongs to the peptidase C54 family. In terms of assembly, interacts with ATG9A; the interaction is direct.

Its subcellular location is the cytoplasm. It carries out the reaction [protein]-C-terminal L-amino acid-glycyl-phosphatidylethanolamide + H2O = [protein]-C-terminal L-amino acid-glycine + a 1,2-diacyl-sn-glycero-3-phosphoethanolamine. Inhibited by N-ethylmaleimide. Redox-regulated during autophagy since reducing conditions activate ATG4A whereas an oxidizing environment such as the presence of H(2)O(2) inhibits its activity. Functionally, cysteine protease that plays a key role in autophagy by mediating both proteolytic activation and delipidation of ATG8 family proteins. The protease activity is required for proteolytic activation of ATG8 family proteins: cleaves the C-terminal amino acid of ATG8 proteins to reveal a C-terminal glycine. Exposure of the glycine at the C-terminus is essential for ATG8 proteins conjugation to phosphatidylethanolamine (PE) and insertion to membranes, which is necessary for autophagy. Preferred substrate is GABARAPL2 followed by MAP1LC3A and GABARAP. Protease activity is also required to counteract formation of high-molecular weight conjugates of ATG8 proteins (ATG8ylation): acts as a deubiquitinating-like enzyme that removes ATG8 conjugated to other proteins, such as ATG3. In addition to the protease activity, also mediates delipidation of ATG8 family proteins. Catalyzes delipidation of PE-conjugated forms of ATG8 proteins during macroautophagy. Compared to ATG4B, the major protein for proteolytic activation of ATG8 proteins, shows weaker ability to cleave the C-terminal amino acid of ATG8 proteins, while it displays stronger delipidation activity. Involved in phagophore growth during mitophagy independently of its protease activity and of ATG8 proteins: acts by regulating ATG9A trafficking to mitochondria and promoting phagophore-endoplasmic reticulum contacts during the lipid transfer phase of mitophagy. This is Cysteine protease ATG4A from Pongo abelii (Sumatran orangutan).